A 498-amino-acid polypeptide reads, in one-letter code: Probable deoxyguanosinetriphosphate triphosphohydrolase (498 aa).

The region spanning 71–262 (RLTHSLEVQQ…MEAADDISYC (192 aa)) is the HD domain.

Belongs to the dGTPase family. Type 1 subfamily. Mg(2+) serves as cofactor.

It catalyses the reaction dGTP + H2O = 2'-deoxyguanosine + triphosphate + H(+). Its function is as follows. dGTPase preferentially hydrolyzes dGTP over the other canonical NTPs. The sequence is that of Probable deoxyguanosinetriphosphate triphosphohydrolase from Pseudomonas aeruginosa (strain ATCC 15692 / DSM 22644 / CIP 104116 / JCM 14847 / LMG 12228 / 1C / PRS 101 / PAO1).